A 92-amino-acid chain; its full sequence is DNA-directed RNA polymerase subunit omega (92 aa).

The protein belongs to the RNA polymerase subunit omega family. As to quaternary structure, the RNAP catalytic core consists of 2 alpha, 1 beta, 1 beta' and 1 omega subunit. When a sigma factor is associated with the core the holoenzyme is formed, which can initiate transcription.

The catalysed reaction is RNA(n) + a ribonucleoside 5'-triphosphate = RNA(n+1) + diphosphate. Functionally, promotes RNA polymerase assembly. Latches the N- and C-terminal regions of the beta' subunit thereby facilitating its interaction with the beta and alpha subunits. The polypeptide is DNA-directed RNA polymerase subunit omega (Acinetobacter baumannii (strain AB307-0294)).